Reading from the N-terminus, the 189-residue chain is Heme-binding protein 1 (189 aa).

The protein belongs to the HEBP family. As to quaternary structure, monomer.

Its subcellular location is the cytoplasm. Its function is as follows. May bind free porphyrinogens that may be present in the cell and thus facilitate removal of these potentially toxic compound. Binds with a high affinity to one molecule of heme or porphyrins. It binds metalloporphyrins, free porphyrins and N-methylprotoporphyrin with similar affinities. The chain is Heme-binding protein 1 (HEBP1) from Sus scrofa (Pig).